A 75-amino-acid polypeptide reads, in one-letter code: Exodeoxyribonuclease 7 small subunit (75 aa).

The protein belongs to the XseB family. In terms of assembly, heterooligomer composed of large and small subunits.

It localises to the cytoplasm. The catalysed reaction is Exonucleolytic cleavage in either 5'- to 3'- or 3'- to 5'-direction to yield nucleoside 5'-phosphates.. In terms of biological role, bidirectionally degrades single-stranded DNA into large acid-insoluble oligonucleotides, which are then degraded further into small acid-soluble oligonucleotides. This is Exodeoxyribonuclease 7 small subunit from Listeria monocytogenes serotype 4b (strain CLIP80459).